A 199-amino-acid chain; its full sequence is V-set and transmembrane domain-containing protein 5 (199 aa).

Residues 1-27 (MRPLRCGERTQGIPLGLLAFWVTAARC) form the signal peptide. Over 28 to 146 (LQSQGVSLYI…VSEIRYEDLH (119 aa)) the chain is Extracellular. In terms of domain architecture, Ig-like C2-type spans 35–138 (LYIPQSAINA…QSGTILLRVS (104 aa)). Asparagine 43, asparagine 87, and asparagine 101 each carry an N-linked (GlcNAc...) asparagine glycan. A helical membrane pass occupies residues 147-167 (FVAVFFALLAAVAVVLISLMW). Residues 168 to 199 (VCNQCAYKFQRKRRYKLKESTTEEIEMKEVEC) are Cytoplasmic-facing. Residues 169 to 185 (CNQCAYKFQRKRRYKLK) are important for CDC42-dependent filopodia induction.

In terms of assembly, can homooligomerize through cis interactions within the same cell membrane. N-glycosylated. Highly expressed in the central nervous system (CNS), with the highest expression in thalamus, hippocampus, cerebrum, midbrain and spinal cord. Also highly expressed in stomach, kidney and small intestine.

The protein localises to the cell membrane. It localises to the cell projection. It is found in the dendrite. The protein resides in the axon. In terms of biological role, cell adhesion-like membrane protein of the central nervous system (CNS) which modulates both the position and complexity of central neurons by altering their membrane morphology and dynamics. Involved in the formation of neuronal dendrites and protrusions including dendritic filopodia. In synaptogenesis, regulates synapse formation by altering dendritic spine morphology and actin distribution. Promotes formation of unstable neuronal spines such as thin and branched types. Regulates neuronal morphogenesis and migration during cortical development in the brain. The protein is V-set and transmembrane domain-containing protein 5 of Mus musculus (Mouse).